The following is an 814-amino-acid chain: DNA topoisomerase 1 (814 aa).

Residues M1–S12 are compositionally biased toward low complexity. The disordered stretch occupies residues M1–D180. Residues I13–S22 are compositionally biased toward basic residues. S52, S54, and S136 each carry phosphoserine. T138 is modified (phosphothreonine). Interaction with DNA regions lie at residues K404 to Y405, R467 to K472, and S559 to K561. The Topo IB-type catalytic domain maps to G411 to W814. Y773 (O-(3'-phospho-DNA)-tyrosine intermediate) is an active-site residue.

Belongs to the type IB topoisomerase family. As to quaternary structure, monomer.

The enzyme catalyses ATP-independent breakage of single-stranded DNA, followed by passage and rejoining.. Releases the supercoiling and torsional tension of DNA introduced during the DNA replication and transcription by transiently cleaving and rejoining one strand of the DNA duplex. Introduces a single-strand break via transesterification at a target site in duplex DNA. The scissile phosphodiester is attacked by the catalytic tyrosine of the enzyme, resulting in the formation of a DNA-(3'-phosphotyrosyl)-enzyme intermediate and the expulsion of a 5'-OH DNA strand. TThe free DNA strand then rotates around the intact phosphodiester bond on the opposing strand, thus removing DNA supercoils. Finally, in the religation step, the DNA 5'-OH attacks the covalent intermediate to expel the active-site tyrosine and restore the DNA phosphodiester backbone. This chain is DNA topoisomerase 1 (top1), found in Schizosaccharomyces pombe (strain 972 / ATCC 24843) (Fission yeast).